A 590-amino-acid chain; its full sequence is Cytosolic Fe-S cluster assembly factor nar1 (590 aa).

Cys-20 serves as a coordination point for [4Fe-4S] cluster. Residues 25–50 (ESLPQKQSNENPYEVTTEDKVQPENP) form a disordered region. Residues Cys-60, Cys-63, Cys-66, Cys-204, and Cys-259 each coordinate [4Fe-4S] cluster. A disordered region spans residues 423-446 (PGAKVATGQTAGGRRQPISRNGAS). The [4Fe-4S] cluster site is built by Cys-461 and Cys-465.

This sequence belongs to the NARF family.

Functionally, component of the cytosolic Fe/S protein assembly machinery. Required for maturation of extramitochondrial Fe/S proteins. May play a role in the transfer of pre-assembled Fe/S clusters to target apoproteins. In Emericella nidulans (strain FGSC A4 / ATCC 38163 / CBS 112.46 / NRRL 194 / M139) (Aspergillus nidulans), this protein is Cytosolic Fe-S cluster assembly factor nar1 (nar1).